The sequence spans 132 residues: Large ribosomal subunit protein uL22 (132 aa).

It belongs to the universal ribosomal protein uL22 family. Part of the 50S ribosomal subunit.

Its function is as follows. This protein binds specifically to 23S rRNA; its binding is stimulated by other ribosomal proteins, e.g. L4, L17, and L20. It is important during the early stages of 50S assembly. It makes multiple contacts with different domains of the 23S rRNA in the assembled 50S subunit and ribosome. Functionally, the globular domain of the protein is located near the polypeptide exit tunnel on the outside of the subunit, while an extended beta-hairpin is found that lines the wall of the exit tunnel in the center of the 70S ribosome. The sequence is that of Large ribosomal subunit protein uL22 from Pelagibacter ubique (strain HTCC1062).